Consider the following 587-residue polypeptide: Thiol:disulfide interchange protein DsbD 2 (587 aa).

A signal peptide spans 1–18; that stretch reads MRVLILLLMLLLPGLSQA. At 19 to 172 the chain is on the periplasmic side; that stretch reads QPGDDLFAPR…SLQAGNLAWS (154 aa). Disulfide bonds link Cys124/Cys130 and Cys188/Cys308. The helical transmembrane segment at 173–193 threads the bilayer; sequence LLLFFGLGLLLAFAPCSLPML. The Cytoplasmic segment spans residues 194-216; the sequence is PILAGLVVGSGAGPRRGLLLAGS. A helical transmembrane segment spans residues 217–237; sequence YVLSMALVYAGLGVVAALLGG. The Periplasmic segment spans residues 238-246; it reads NLQAWLQQP. A helical transmembrane segment spans residues 247 to 267; it reads WLLGSFAALFVFLALPMFGFF. Topologically, residues 268–299 are cytoplasmic; it reads ELQLPAALRDRLDGLSRGRKGGSLAGAAALGA. Residues 300-320 form a helical membrane-spanning segment; the sequence is LSGLLVGPCMTAPLAGALLYI. Topologically, residues 321-330 are periplasmic; sequence AQTGNALHGG. The helical transmembrane segment at 331 to 351 threads the bilayer; sequence LVLFSLGLGIGMPLLLLVTVG. The Cytoplasmic portion of the chain corresponds to 352-360; that stretch reads SRFLPKPGP. Residues 361 to 381 form a helical membrane-spanning segment; it reads WMNLVKGVFGFLFLGTAWILL. Residues 382-383 are Periplasmic-facing; it reads RP. The helical transmembrane segment at 384–404 threads the bilayer; the sequence is LLGEALWIGLGGALLLVLAYA. Topologically, residues 405–416 are cytoplasmic; sequence ALHTARGLARHA. The helical transmembrane segment at 417-437 threads the bilayer; that stretch reads VLFGAAGCIFGLWGAAMLLGA. At 438 to 587 the chain is on the periplasmic side; sequence AAGADDPWRP…AHWQATRERG (150 aa). The region spanning 448–585 is the Thioredoxin domain; the sequence is LQVYAAANRG…FLAHWQATRE (138 aa). Cys500 and Cys503 are joined by a disulfide.

It belongs to the thioredoxin family. DsbD subfamily.

It localises to the cell inner membrane. The enzyme catalyses [protein]-dithiol + NAD(+) = [protein]-disulfide + NADH + H(+). The catalysed reaction is [protein]-dithiol + NADP(+) = [protein]-disulfide + NADPH + H(+). In terms of biological role, required to facilitate the formation of correct disulfide bonds in some periplasmic proteins and for the assembly of the periplasmic c-type cytochromes. Acts by transferring electrons from cytoplasmic thioredoxin to the periplasm. This transfer involves a cascade of disulfide bond formation and reduction steps. The chain is Thiol:disulfide interchange protein DsbD 2 from Pseudomonas aeruginosa (strain ATCC 15692 / DSM 22644 / CIP 104116 / JCM 14847 / LMG 12228 / 1C / PRS 101 / PAO1).